Reading from the N-terminus, the 147-residue chain is Peptide methionine sulfoxide reductase MsrB (147 aa).

One can recognise a MsrB domain in the interval 8–131 (KEELKKVLTE…NSASLKFIPK (124 aa)). The Nucleophile role is filled by Cys120.

The protein belongs to the MsrB Met sulfoxide reductase family.

The enzyme catalyses L-methionyl-[protein] + [thioredoxin]-disulfide + H2O = L-methionyl-(R)-S-oxide-[protein] + [thioredoxin]-dithiol. This is Peptide methionine sulfoxide reductase MsrB from Clostridium perfringens (strain ATCC 13124 / DSM 756 / JCM 1290 / NCIMB 6125 / NCTC 8237 / Type A).